We begin with the raw amino-acid sequence, 313 residues long: Protein FixB (313 aa).

255–283 (LYLAVGISGQIQHMVGANASQTIFAINKD) is a binding site for FAD.

Belongs to the ETF alpha-subunit/FixB family. Heterodimer of FixA and FixB.

It functions in the pathway amine and polyamine metabolism; carnitine metabolism. Its function is as follows. Required for anaerobic carnitine reduction. May bring reductant to CaiA. This is Protein FixB from Escherichia coli O157:H7.